The chain runs to 272 residues: Phosphatidylglycerol--prolipoprotein diacylglyceryl transferase (272 aa).

Transmembrane regions (helical) follow at residues 19–39 (ISIR…YFLV), 58–78 (LNTV…VVFY), and 94–114 (WHGG…GLIF). Arginine 141 is a binding site for a 1,2-diacyl-sn-glycero-3-phospho-(1'-sn-glycerol). Transmembrane regions (helical) follow at residues 207–227 (GTIL…IENF) and 234–254 (LGFI…MILC).

Belongs to the Lgt family.

The protein localises to the cell inner membrane. The enzyme catalyses L-cysteinyl-[prolipoprotein] + a 1,2-diacyl-sn-glycero-3-phospho-(1'-sn-glycerol) = an S-1,2-diacyl-sn-glyceryl-L-cysteinyl-[prolipoprotein] + sn-glycerol 1-phosphate + H(+). It participates in protein modification; lipoprotein biosynthesis (diacylglyceryl transfer). Its function is as follows. Catalyzes the transfer of the diacylglyceryl group from phosphatidylglycerol to the sulfhydryl group of the N-terminal cysteine of a prolipoprotein, the first step in the formation of mature lipoproteins. In Desulfotalea psychrophila (strain LSv54 / DSM 12343), this protein is Phosphatidylglycerol--prolipoprotein diacylglyceryl transferase.